Here is a 222-residue protein sequence, read N- to C-terminus: Putative serine proteinase inhibitor 2 homolog second part (222 aa).

The protein belongs to the serpin family. Poxviruses subfamily.

The sequence is that of Putative serine proteinase inhibitor 2 homolog second part from Homo sapiens (Human).